A 392-amino-acid polypeptide reads, in one-letter code: Adenine nucleotide transporter BT1, chloroplastic/mitochondrial (392 aa).

3 Solcar repeats span residues asparagine 108 to lysine 191, isoleucine 202 to alanine 286, and isoleucine 296 to isoleucine 384. Transmembrane regions (helical) follow at residues arginine 113 to threonine 133, leucine 168 to valine 188, isoleucine 204 to proline 224, alanine 263 to leucine 283, leucine 302 to alanine 322, and glycine 359 to glutamate 379.

This sequence belongs to the mitochondrial carrier (TC 2.A.29) family. As to expression, expressed in root tips, the central cylinder of young roots, and maturating and germinating pollen.

The protein localises to the plastid. It is found in the chloroplast inner membrane. Its subcellular location is the mitochondrion inner membrane. Inhibited by pyridoxal 5-phosphate but not mersalyl. Functionally, probable mitochondrial adenylate carrier that catalyzes the transport of ATP, ADP and AMP, but not ADP-glucose. Recombinant BT1 shows a unidirectional mode of transport in intact E.coli cells. May function as a plastidial nucleotide uniport carrier required to export newly synthesized adenylates into the cytosol. May be involved in abiotic stress response. This is Adenine nucleotide transporter BT1, chloroplastic/mitochondrial (BT1) from Arabidopsis thaliana (Mouse-ear cress).